A 504-amino-acid polypeptide reads, in one-letter code: Flavin-dependent halogenase armH3 (504 aa).

Positions 16, 19, 49, and 149 each coordinate FAD. Positions 329 and 330 each coordinate chloride. I331 lines the FAD pocket. The tract at residues 444 to 475 (NNLRTPVDTGAADVKAKHAPSETDAQNPLQSM) is disordered.

Belongs to the flavin-dependent halogenase family.

The catalysed reaction is melleolide F + FADH2 + chloride + O2 = 6'-chloromelleolide F + FAD + 2 H2O + H(+). Flavin-dependent halogenase involved in the biosynthesis of melleolides, a range of antifungal and phytotoxic polyketide derivatives composed of an orsellinic acid (OA) moiety esterified to various sesquiterpene alcohols. The halogenase catalyzes the transfer of a single chlorine atom to the melleolide backbone, resulting in a 6'-chloromelleolide product. The enzyme acts on free substrate and does not depend on carrier-protein-dependent acceptor molecules. This Armillaria mellea (Honey mushroom) protein is Flavin-dependent halogenase armH3.